An 871-amino-acid polypeptide reads, in one-letter code: CRISPR system Cmr subunit Cmr2 (871 aa).

Positions 1–215 are not required for target RNA cleavage; sequence MVNIKEKLFV…THLDLTSALS (215 aa). Mn(2+) is bound by residues histidine 13, aspartate 14, and histidine 25. Positions 448, 451, 478, and 481 each coordinate Zn(2+). A GGDEF domain is found at 592-752; the sequence is KYYAILVMDG…GKDTLAIGLL (161 aa). Residues aspartate 600, glutamate 656, aspartate 673, aspartate 674, glutamate 694, and glutamate 700 each coordinate Mn(2+).

It belongs to the CRISPR system Cmr2 family. As to quaternary structure, part of the type III-B Cmr ribonucleoprotein (RNP) complex, an elongated RNP with Cmr2 and Cmr3 as the base, with Cmr4 and Cmr5 forming a helical core along the mature crRNA (39 or 45 nt in length), while the complex is capped by Cmr6 and Cmr1. The 5' end of the crRNA is bound to Cmr2 and Cmr3, while Cmr6 and a Cmr1 subunit (Cmr1-1 or Cmr1-2) cap the 3' end of the crRNA. The target RNA lies antiparallel to the crRNA, with its 5' end near Cmr1 and Cmr6 and its 3' end near Cmr2 and Cmr3; major target cleavage occurs nears the junction of Cmr1/Cmr6 and Cmr4/Cmr, with minor cleavage occurring at 6 nt intervals which coincide with the proposed spacing of Cmr4 subunits. Forms a 1:1 complex with Cmr3. The Cmr2-Cmr3 complex non-specifically binds ss-target RNA and crRNA. Interacts with Cmr3, Cmr4 and Cmr5. Ca(2+) serves as cofactor. The cofactor is Mn(2+). Requires Zn(2+) as cofactor.

The protein localises to the cytoplasm. Functionally, CRISPR (clustered regularly interspaced short palindromic repeat), is an adaptive immune system that provides protection against mobile genetic elements (viruses, transposable elements and conjugative plasmids). CRISPR clusters contain sequences complementary to antecedent mobile elements and target invading nucleic acids. CRISPR clusters are transcribed and processed into CRISPR RNA (crRNA), formerly called psiRNA (prokaryotic silencing) in this organism. Part of the Cmr ribonucleoprotein complex which has divalent cation-dependent endoribonuclease activity specific for ssRNA complementary to the crRNA (target RNA), generating 5' hydroxy- and 3' phosphate or 2'-3' cyclic phosphate termini. Cmr4 is probably the subunit that cleaves target RNA. Cmr complex does not cleave ssDNA complementary to the crRNA. Cleavage of target RNA is guided by the crRNA; substrate cleavage occurs a fixed distance (14 nt) from the 3' end of the crRNA. In vitro reconstitution shows Cmr1-2 and Cmr5 are not absolutely necessary for target cleavage. In Pyrococcus furiosus (strain ATCC 43587 / DSM 3638 / JCM 8422 / Vc1), this protein is CRISPR system Cmr subunit Cmr2.